Here is a 230-residue protein sequence, read N- to C-terminus: Claudin-2 (230 aa).

At 1-7 the chain is on the cytoplasmic side; that stretch reads MASLGLQ. Residues 8 to 28 form a helical membrane-spanning segment; that stretch reads LVGYILGLLGLLGTLVAMLLP. Over 29-81 the chain is Extracellular; sequence SWKTSSYVGASIVTAVGFSKGLWMECATHSTGITQCDIYSTLLGLPADIQAAQ. A disulfide bridge connects residues Cys54 and Cys64. Residues 82–102 form a helical membrane-spanning segment; the sequence is AMMVTSSAISSLACIISVVGM. The Cytoplasmic portion of the chain corresponds to 103 to 116; it reads RCTVFCQESRAKDR. Residues 117–137 traverse the membrane as a helical segment; the sequence is VAVAGGVFFILGGLLGFIPVA. Topologically, residues 138 to 162 are extracellular; it reads WNLHGILRDFYSPLVPDSMKFEIGE. Residues 163–183 form a helical membrane-spanning segment; sequence ALYLGIISSLFSLIAGIILCF. The Cytoplasmic portion of the chain corresponds to 184–230; sequence SCSSQRNRSNYYDAYQAQPLATRSSPRPGQPPKVKSEFNSYSLTGYV. Residues 205 to 230 are disordered; that stretch reads TRSSPRPGQPPKVKSEFNSYSLTGYV. Residue Lys218 forms a Glycyl lysine isopeptide (Lys-Gly) (interchain with G-Cter in SUMO) linkage. A phosphoserine mark is found at Ser219 and Ser223. Residues 220 to 230 are compositionally biased toward polar residues; sequence EFNSYSLTGYV. The interactions with TJP1, TJP2 and TJP3 stretch occupies residues 229-230; it reads YV.

Belongs to the claudin family. As to quaternary structure, can form homo- and heteropolymers with other claudins to mediate paracellular barrier and channel functions of tight junctions in response to physiological stimuli. Homopolymers interact with CLDN3, but not CLDN1, homopolymers. Directly interacts with TJP1/ZO-1, TJP2/ZO-2 and TJP3/ZO-3. In terms of processing, the disulfide bond is necessary for pore formation, but is not required for correct protein trafficking.

It is found in the cell junction. Its subcellular location is the tight junction. It localises to the cell membrane. The enzyme catalyses Na(+)(in) = Na(+)(out). It carries out the reaction K(+)(in) = K(+)(out). The catalysed reaction is Rb(+)(in) = Rb(+)(out). It catalyses the reaction Li(+)(in) = Li(+)(out). The enzyme catalyses Cs(+)(in) = Cs(+)(out). It carries out the reaction Ca(2+)(in) = Ca(2+)(out). The catalysed reaction is methylamine(out) = methylamine(in). It catalyses the reaction choline(out) = choline(in). The enzyme catalyses H2O(in) = H2O(out). Functionally, forms paracellular channels: polymerizes in tight junction strands with cation- and water-selective channels through the strands, conveying epithelial permeability in a process known as paracellular tight junction permeability. In intestinal epithelium, allows for sodium and water fluxes from the peritoneal side to the lumen of the intestine to regulate nutrient absorption and clear enteric pathogens as part of mucosal immune response. In kidney, allows passive sodium and calcium reabsorption across proximal tubules from the lumen back to the bloodstream. In the hepatobiliary tract, allows paracellular water and cation fluxes in the hepatic perivenous areas and biliary epithelium to generate bile flow and maintain osmotic gradients. This is Claudin-2 from Homo sapiens (Human).